The following is a 658-amino-acid chain: Putative phospholipase B-like lamina ancestor (658 aa).

Residues 1–29 form the signal peptide; the sequence is MLKVVGASWQKTRIGTYILIGAGLLVIGA. N229, N465, and N486 each carry an N-linked (GlcNAc...) asparagine glycan.

Belongs to the phospholipase B-like family. As to expression, expressed in neural and glial progenitors prior to, but not after, differentiation. Not expressed in late third instar disks, but is expressed uniformly by early third instar disks, in the imaginal ring of the proventriculus and in the salivary gland.

It localises to the secreted. Putative phospholipase. Involved in the regulation of cellular plasticity in imaginal disks. This is Putative phospholipase B-like lamina ancestor (lama) from Drosophila melanogaster (Fruit fly).